Consider the following 287-residue polypeptide: Transmembrane protein 71 (287 aa).

A disordered region spans residues 1 to 25; it reads MYRDSPLMSTPVANDSRSDEGPSGK. 2 consecutive transmembrane segments (helical) span residues 218–238 and 244–264; these read AGLM…LVIS and FVGG…IAYV.

The protein belongs to the TMEM71 family.

It is found in the membrane. In Mus musculus (Mouse), this protein is Transmembrane protein 71 (Tmem71).